Here is a 61-residue protein sequence, read N- to C-terminus: Large ribosomal subunit protein uL30 (61 aa).

Belongs to the universal ribosomal protein uL30 family. As to quaternary structure, part of the 50S ribosomal subunit.

This is Large ribosomal subunit protein uL30 from Saccharophagus degradans (strain 2-40 / ATCC 43961 / DSM 17024).